The sequence spans 86 residues: Cytochrome c oxidase subunit 6B1 (86 aa).

Residue A2 is modified to N-acetylalanine. One can recognise a CHCH domain in the interval 27 to 73 (TRNCWQNYLDFHRCQKAMTAKGGDISVCEWYQRVYQSLCPTSWVTDW). A Cx9C motif motif is present at residues 30–40 (CWQNYLDFHRC). Disulfide bonds link C30–C65 and C40–C54. Residues 54–65 (CEWYQRVYQSLC) carry the Cx10C motif motif.

It belongs to the cytochrome c oxidase subunit 6B family. Component of the cytochrome c oxidase (complex IV, CIV), a multisubunit enzyme composed of 14 subunits. The complex is composed of a catalytic core of 3 subunits MT-CO1, MT-CO2 and MT-CO3, encoded in the mitochondrial DNA, and 11 supernumerary subunits COX4I, COX5A, COX5B, COX6A, COX6B, COX6C, COX7A, COX7B, COX7C, COX8 and NDUFA4, which are encoded in the nuclear genome. The complex exists as a monomer or a dimer and forms supercomplexes (SCs) in the inner mitochondrial membrane with NADH-ubiquinone oxidoreductase (complex I, CI) and ubiquinol-cytochrome c oxidoreductase (cytochrome b-c1 complex, complex III, CIII), resulting in different assemblies (supercomplex SCI(1)III(2)IV(1) and megacomplex MCI(2)III(2)IV(2)).

It is found in the mitochondrion inner membrane. Its pathway is energy metabolism; oxidative phosphorylation. Functionally, component of the cytochrome c oxidase, the last enzyme in the mitochondrial electron transport chain which drives oxidative phosphorylation. The respiratory chain contains 3 multisubunit complexes succinate dehydrogenase (complex II, CII), ubiquinol-cytochrome c oxidoreductase (cytochrome b-c1 complex, complex III, CIII) and cytochrome c oxidase (complex IV, CIV), that cooperate to transfer electrons derived from NADH and succinate to molecular oxygen, creating an electrochemical gradient over the inner membrane that drives transmembrane transport and the ATP synthase. Cytochrome c oxidase is the component of the respiratory chain that catalyzes the reduction of oxygen to water. Electrons originating from reduced cytochrome c in the intermembrane space (IMS) are transferred via the dinuclear copper A center (CU(A)) of subunit 2 and heme A of subunit 1 to the active site in subunit 1, a binuclear center (BNC) formed by heme A3 and copper B (CU(B)). The BNC reduces molecular oxygen to 2 water molecules using 4 electrons from cytochrome c in the IMS and 4 protons from the mitochondrial matrix. The sequence is that of Cytochrome c oxidase subunit 6B1 (COX6B1) from Pongo abelii (Sumatran orangutan).